We begin with the raw amino-acid sequence, 93 residues long: Stromal cell-derived factor 1 (93 aa).

The N-terminal stretch at 1–21 (MNAKVVVVLVLVLTALCLSDG) is a signal peptide. A Receptor activation motif motif is present at residues 22–23 (KP). The segment at 29–33 (RCPCR) is receptor and heparin binding. 2 cysteine pairs are disulfide-bonded: C30–C55 and C32–C71. 3 receptor binding regions span residues 39 to 41 (VAR), 48 to 50 (KIL), and 60 to 70 (VARLKNNNRQV). Heparin is bound by residues 41–51 (RANVKHLKILN), R62, Q69, and K85.

It belongs to the intercrine alpha (chemokine CxC) family. In terms of assembly, monomer or homodimer; in equilibrium. Dimer formation is induced by non acidic pH and the presence of multivalent anions, and by binding to CXCR4 or heparin. Monomeric form is required for full chemotactic activity and resistance to ischemia/reperfusion injury, whereas the dimeric form acts as a partial agonist of CXCR4, stimulating Ca2+ mobilization but with no chemotactic activity and instead acts as a selective antagonist that blocks chemotaxis induced by the monomeric form. Interacts with the N-terminus of ACKR3. Interacts with integrin subunit ITGB3 (via the allosteric site (site 2)). Interacts with TNFAIP6 (via Link domain). (Microbial infection) Interacts with molluscum contagiosum virus protein MC148. Processed forms SDF-1-beta(3-72) and SDF-1-alpha(3-67) are produced after secretion by proteolytic cleavage of isoforms Beta and Alpha, respectively. The N-terminal processing is probably achieved by DPP4. Isoform Alpha is first cleaved at the C-terminus to yield a SDF-1-alpha(1-67) intermediate before being processed at the N-terminus. The C-terminal processing of isoform Alpha is reduced by binding to heparin and, probably, cell surface proteoglycans. As to expression, isoform Alpha and isoform Beta are ubiquitously expressed, with highest levels detected in liver, pancreas and spleen. Isoform Gamma is mainly expressed in heart, with weak expression detected in several other tissues. Isoform Delta, isoform Epsilon and isoform Theta have highest expression levels in pancreas, with lower levels detected in heart, kidney, liver and spleen.

It is found in the secreted. Its function is as follows. Chemoattractant active on T-lymphocytes and monocytes but not neutrophils. Activates the C-X-C chemokine receptor CXCR4 to induce a rapid and transient rise in the level of intracellular calcium ions and chemotaxis. SDF-1-beta(3-72) and SDF-1-alpha(3-67) show a reduced chemotactic activity. Binding to cell surface proteoglycans seems to inhibit formation of SDF-1-alpha(3-67) and thus to preserve activity on local sites. Also binds to atypical chemokine receptor ACKR3, which activates the beta-arrestin pathway and acts as a scavenger receptor for SDF-1. Binds to the allosteric site (site 2) of integrins and activates integrins ITGAV:ITGB3, ITGA4:ITGB1 and ITGA5:ITGB1 in a CXCR4-independent manner. Acts as a positive regulator of monocyte migration and a negative regulator of monocyte adhesion via the LYN kinase. Stimulates migration of monocytes and T-lymphocytes through its receptors, CXCR4 and ACKR3, and decreases monocyte adherence to surfaces coated with ICAM-1, a ligand for beta-2 integrins. SDF1A/CXCR4 signaling axis inhibits beta-2 integrin LFA-1 mediated adhesion of monocytes to ICAM-1 through LYN kinase. Inhibits CXCR4-mediated infection by T-cell line-adapted HIV-1. Plays a protective role after myocardial infarction. Induces down-regulation and internalization of ACKR3 expressed in various cells. Has several critical functions during embryonic development; required for B-cell lymphopoiesis, myelopoiesis in bone marrow and heart ventricular septum formation. Stimulates the proliferation of bone marrow-derived B-cell progenitors in the presence of IL7 as well as growth of stromal cell-dependent pre-B-cells. The protein is Stromal cell-derived factor 1 (CXCL12) of Homo sapiens (Human).